We begin with the raw amino-acid sequence, 157 residues long: Protein-export protein SecB (157 aa).

The protein belongs to the SecB family. As to quaternary structure, homotetramer, a dimer of dimers. One homotetramer interacts with 1 SecA dimer.

It is found in the cytoplasm. In terms of biological role, one of the proteins required for the normal export of preproteins out of the cell cytoplasm. It is a molecular chaperone that binds to a subset of precursor proteins, maintaining them in a translocation-competent state. It also specifically binds to its receptor SecA. The sequence is that of Protein-export protein SecB from Dichelobacter nodosus (strain VCS1703A).